The chain runs to 451 residues: Protein NINJA homolog 1 (451 aa).

Disordered regions lie at residues 1 to 223 (MDDE…QGNP), 321 to 346 (ISQADDGKKTQEAGASSSALVEDDKK), and 427 to 451 (DAPGQENSATLPAFPVGNQAASAQN). Positions 23-35 (KARDAPLEPKAEP) are enriched in basic and acidic residues. 3 stretches are compositionally biased toward polar residues: residues 38–49 (EESSSKGVSQTP), 86–103 (PGSSSVPVADGSNEQKPV), and 143–153 (ISISTDDGSTG). The span at 154–163 (ENEDVAESEA) shows a compositional bias: acidic residues. Low complexity predominate over residues 207–216 (SFSGSESSSG).

This sequence belongs to the Ninja family. As to quaternary structure, interacts with TIFY10C/JAZ8. Interacts with TIFY11A/JAZ9.

It is found in the nucleus. The polypeptide is Protein NINJA homolog 1 (Oryza sativa subsp. japonica (Rice)).